We begin with the raw amino-acid sequence, 75 residues long: MKTEIHPDYHTITVVMTDGTEYQTRSTWGKEGDKLNLDIDPKSHPAWTGGTQQVLDRGGRVSRFQKKFSGFLKKD.

Part of the 50S ribosomal subunit.

In terms of biological role, binds the 23S rRNA. The protein is Large ribosomal subunit protein bL31 of Rhodopseudomonas palustris (strain ATCC BAA-98 / CGA009).